The primary structure comprises 253 residues: Amino-acid-binding protein AabA (253 aa).

An N-terminal signal peptide occupies residues 1 to 23 (MPFLKTLFRGALCSIACGASLFC).

It belongs to the bacterial solute-binding protein 3 family.

The protein localises to the periplasm. The chain is Amino-acid-binding protein AabA (aabA) from Dichelobacter nodosus (Bacteroides nodosus).